The chain runs to 328 residues: Phenylalanine--tRNA ligase alpha subunit (328 aa).

Glutamate 253 serves as a coordination point for Mg(2+).

It belongs to the class-II aminoacyl-tRNA synthetase family. Phe-tRNA synthetase alpha subunit type 1 subfamily. In terms of assembly, tetramer of two alpha and two beta subunits. The cofactor is Mg(2+).

It is found in the cytoplasm. The catalysed reaction is tRNA(Phe) + L-phenylalanine + ATP = L-phenylalanyl-tRNA(Phe) + AMP + diphosphate + H(+). In Coxiella burnetii (strain Dugway 5J108-111), this protein is Phenylalanine--tRNA ligase alpha subunit.